Reading from the N-terminus, the 308-residue chain is tRNA dimethylallyltransferase 2 (308 aa).

13 to 20 is a binding site for ATP; that stretch reads GPTASGKT. 15-20 contacts substrate; that stretch reads TASGKT. The tract at residues 38–41 is interaction with substrate tRNA; sequence DSRQ.

It belongs to the IPP transferase family. As to quaternary structure, monomer. It depends on Mg(2+) as a cofactor.

The enzyme catalyses adenosine(37) in tRNA + dimethylallyl diphosphate = N(6)-dimethylallyladenosine(37) in tRNA + diphosphate. In terms of biological role, catalyzes the transfer of a dimethylallyl group onto the adenine at position 37 in tRNAs that read codons beginning with uridine, leading to the formation of N6-(dimethylallyl)adenosine (i(6)A). The polypeptide is tRNA dimethylallyltransferase 2 (Bacteroides fragilis (strain YCH46)).